Here is a 168-residue protein sequence, read N- to C-terminus: uncharacterized protein (168 aa).

The chain crosses the membrane as a helical span at residues 24–44 (FIGIVLFLAVLIIGILILILF). Disordered stretches follow at residues 69 to 92 (SPSSSFLINNNNNNNNYHQNNNSN) and 142 to 168 (NNNNNNNNNPPTNISNKLNKNGETKNI). A compositionally biased stretch (low complexity) spans 142 to 157 (NNNNNNNNNPPTNISN).

It is found in the membrane. This is an uncharacterized protein from Dictyostelium discoideum (Social amoeba).